The sequence spans 554 residues: MQGPHLSPLVLLLATMGAVLQPEAVENLATNTRGLIFLEDELWPPSSPPEPLCLVTVRGEGNTSRASLRVVGGLNSYEYAFLEAVQESRWGPQDLATFGVCSTDSQATLPALQRLGAWLGETGEQQLLVLHLAEVIWEPELLLKFQEPPPGGASRWEQALLVLYPGPGPQVTVTGTGLRGTQNLCPTRDTRYLVLTVDFPAGAWSGSGLILTLQPSREGATLSIDQLQAFLFGSDSRCFTRMTPTLVVLPPAEPSPQPAHGQLDTMPFPQPGLSLEPEALPHSADPFLETLTRLVRALRGPLTQASNTQLALDPGALASFPQGLVNLSDPAALGRLLDWEEPLLLLLSPAAATEREPMPLHGPASAPWAAGLQRRVAVELQAAASELRDLPGLPPTAPPLLARLLALCPNDSRSSGDPLRALLLLKALQGLRAEWHGREGRGRTGRSAGTGTDGPCALRELSVDLRAERSVLIPETYQANNCQGACAWPQSDRNPRYGNHVVLLLKMQARGAALGRLPCCVPTAYAGKLLISLSEERISAHHVPNMVATECGCV.

The N-terminal stretch at 1 to 24 (MQGPHLSPLVLLLATMGAVLQPEA) is a signal peptide. Residues 25–446 (VENLATNTRG…GREGRGRTGR (422 aa)) constitute a propeptide that is removed on maturation. N-linked (GlcNAc...) asparagine glycans are attached at residues N62, N326, and N410. Cystine bridges form between C456–C520, C482–C551, and C486–C553.

This sequence belongs to the TGF-beta family. As to quaternary structure, homodimer; disulfide-linked. In terms of processing, preproprotein is proteolytically processed to generate N- and C-terminal cleavage products that homodimerize and associate to form a biologically active non-covalent complex. Binding of the non-covalent complex to AMHRII induces dissociation of the pro-region from the mature C-terminal dimer. The N-terminal portion of the protein, despite having no intrinsic activity, has the role of amplifying the activity of the C-terminus. Expressed in Sertoli cells of fetal testes, and in testes just after birth, but absent in adult testes. In female, AMH is expressed after birth in the granulosa cells of the follicle.

The protein localises to the secreted. In terms of biological role, plays an important role in several reproductive functions, including Muellerian duct regression during male fetal sexua,l differentiation and in the adult plays a role in Leydig cell differentiation and function. In female acts as a negative regulator of the primordial to primary follicle transition and decreases FSH sensitivity of growing follicles. Binds to its sole type II receptor, AMHR2 that recruits type I receptors ACVR1 and BMPR1A which subsequently activates the Smad pathway. The chain is Muellerian-inhibiting factor (Amh) from Mus musculus (Mouse).